Consider the following 320-residue polypeptide: Small ribosomal subunit protein uS2 (320 aa).

The segment covering 1 to 22 (MADETTTDTPDVQDEDAPDEDA) has biased composition (acidic residues). The segment at 1 to 83 (MADETTTDTP…SSSEEETSHR (83 aa)) is disordered. Positions 27–41 (DDTASDSTGEAAAAD) are enriched in low complexity. Acidic residues-rich tracts occupy residues 42–57 (TDAD…EDAP) and 65–78 (DDGD…SSEE).

Belongs to the universal ribosomal protein uS2 family.

The sequence is that of Small ribosomal subunit protein uS2 from Salinibacter ruber (strain DSM 13855 / M31).